The following is a 190-amino-acid chain: C-type lectin domain family 5 member A (190 aa).

The Cytoplasmic portion of the chain corresponds to 1–4 (MNWH). The helical; Signal-anchor for type II membrane protein transmembrane segment at 5 to 25 (MIISGLIVVVIKVVGMTFFLL) threads the bilayer. The Extracellular portion of the chain corresponds to 26 to 190 (YFPQVFGKSN…YRWICEMNAK (165 aa)). Asn51, Asn146, and Asn153 each carry an N-linked (GlcNAc...) asparagine glycan. Residues 80–186 (HQGKCFFFSF…CEVSYRWICE (107 aa)) enclose the C-type lectin domain. Disulfide bonds link Cys101/Cys185 and Cys163/Cys177.

As to quaternary structure, monomer. Homodimer. The majority of CLEC5A is expressed as a monomeric form on macrophages. Interacts with TYROBP/DAP12. The interaction with TYROBP is required for CLEC5 cell surface expression. Interacts with HCST/DAP10. Forms a CLEC5A/TYROBP/HCST trimolecular complex depending almost solely on TYROBP. In terms of processing, N-glycosylated. Contains sialic acid residues. Strong expression in bone marrow cells and thioglycollate-induced neutrophils (at protein level). Expressed on granulocytes and monocytes from bone marrow and peripheral blood. Expressed in macrophage cell line J-774, but not in T-cell lines, B-cell lines, or mast cell lines.

The protein resides in the cell membrane. Functions as a positive regulator of osteoclastogenesis. Cell surface receptor that signals via TYROBP. Regulates inflammatory responses. This is C-type lectin domain family 5 member A (Clec5a) from Mus musculus (Mouse).